The primary structure comprises 221 residues: Deoxyribose-phosphate aldolase (221 aa).

The active-site Proton donor/acceptor is the D90. Catalysis depends on K152, which acts as the Schiff-base intermediate with acetaldehyde. K181 (proton donor/acceptor) is an active-site residue.

It belongs to the DeoC/FbaB aldolase family. DeoC type 1 subfamily.

The protein localises to the cytoplasm. It carries out the reaction 2-deoxy-D-ribose 5-phosphate = D-glyceraldehyde 3-phosphate + acetaldehyde. It functions in the pathway carbohydrate degradation; 2-deoxy-D-ribose 1-phosphate degradation; D-glyceraldehyde 3-phosphate and acetaldehyde from 2-deoxy-alpha-D-ribose 1-phosphate: step 2/2. Functionally, catalyzes a reversible aldol reaction between acetaldehyde and D-glyceraldehyde 3-phosphate to generate 2-deoxy-D-ribose 5-phosphate. The sequence is that of Deoxyribose-phosphate aldolase from Syntrophotalea carbinolica (strain DSM 2380 / NBRC 103641 / GraBd1) (Pelobacter carbinolicus).